Consider the following 610-residue polypeptide: UvrABC system protein C (610 aa).

The GIY-YIG domain maps to 16-94 (SQPGVYRMYD…IKLYQPRYNV (79 aa)). Residues 204-239 (DQVLTQLIARMEKASQDLAFEEAARIRDQIQAVRRV) enclose the UVR domain.

This sequence belongs to the UvrC family. Interacts with UvrB in an incision complex.

It localises to the cytoplasm. In terms of biological role, the UvrABC repair system catalyzes the recognition and processing of DNA lesions. UvrC both incises the 5' and 3' sides of the lesion. The N-terminal half is responsible for the 3' incision and the C-terminal half is responsible for the 5' incision. The polypeptide is UvrABC system protein C (Salmonella heidelberg (strain SL476)).